The following is a 247-amino-acid chain: PHD finger protein ALFIN-LIKE 3 (247 aa).

The segment at 147-178 is disordered; sequence DRSGVDSSGKSKHSTKRTGEGQVKRSRVVAEE. Residues 188 to 240 form a PHD-type zinc finger; sequence ETFCGTCGGLYNANEFWIGCDICERWFHGKCVRITPAKAEHIKHYKCPDCSSS.

It belongs to the Alfin family. In terms of assembly, interacts with H3K4me3 and to a lesser extent with H3K4me2.

Its subcellular location is the nucleus. Functionally, histone-binding component that specifically recognizes H3 tails trimethylated on 'Lys-4' (H3K4me3), which mark transcription start sites of virtually all active genes. In Oryza sativa subsp. indica (Rice), this protein is PHD finger protein ALFIN-LIKE 3.